A 680-amino-acid chain; its full sequence is tRNA 5-methylaminomethyl-2-thiouridine biosynthesis bifunctional protein MnmC (680 aa).

The segment at 1-267 (MTAEPNKPCQ…MAAILSSDAP (267 aa)) is tRNA (mnm(5)s(2)U34)-methyltransferase. Residues 273 to 680 (IGGGLASAHL…LRKLLKGKAL (408 aa)) are FAD-dependent cmnm(5)s(2)U34 oxidoreductase.

In the N-terminal section; belongs to the methyltransferase superfamily. tRNA (mnm(5)s(2)U34)-methyltransferase family. It in the C-terminal section; belongs to the DAO family. The cofactor is FAD.

Its subcellular location is the cytoplasm. The enzyme catalyses 5-aminomethyl-2-thiouridine(34) in tRNA + S-adenosyl-L-methionine = 5-methylaminomethyl-2-thiouridine(34) in tRNA + S-adenosyl-L-homocysteine + H(+). Catalyzes the last two steps in the biosynthesis of 5-methylaminomethyl-2-thiouridine (mnm(5)s(2)U) at the wobble position (U34) in tRNA. Catalyzes the FAD-dependent demodification of cmnm(5)s(2)U34 to nm(5)s(2)U34, followed by the transfer of a methyl group from S-adenosyl-L-methionine to nm(5)s(2)U34, to form mnm(5)s(2)U34. This chain is tRNA 5-methylaminomethyl-2-thiouridine biosynthesis bifunctional protein MnmC, found in Shewanella putrefaciens (strain CN-32 / ATCC BAA-453).